The following is a 159-amino-acid chain: NADH-quinone oxidoreductase subunit B (159 aa).

Residues Cys-36, Cys-37, Cys-102, and Cys-132 each contribute to the [4Fe-4S] cluster site.

This sequence belongs to the complex I 20 kDa subunit family. As to quaternary structure, NDH-1 is composed of 14 different subunits. Subunits NuoB, C, D, E, F, and G constitute the peripheral sector of the complex. The cofactor is [4Fe-4S] cluster.

The protein resides in the cell inner membrane. It catalyses the reaction a quinone + NADH + 5 H(+)(in) = a quinol + NAD(+) + 4 H(+)(out). In terms of biological role, NDH-1 shuttles electrons from NADH, via FMN and iron-sulfur (Fe-S) centers, to quinones in the respiratory chain. Couples the redox reaction to proton translocation (for every two electrons transferred, four hydrogen ions are translocated across the cytoplasmic membrane), and thus conserves the redox energy in a proton gradient. This chain is NADH-quinone oxidoreductase subunit B, found in Verminephrobacter eiseniae (strain EF01-2).